Consider the following 311-residue polypeptide: Thioredoxin reductase (311 aa).

FAD-binding positions include 31–39 (FEKGMPGGQ) and 32–39 (EKGMPGGQ). Cys-133 and Cys-136 are disulfide-bonded. 281 to 290 (DIRIFAPKQV) serves as a coordination point for FAD.

Belongs to the class-II pyridine nucleotide-disulfide oxidoreductase family. Homodimer. FAD is required as a cofactor.

The protein resides in the cytoplasm. It carries out the reaction [thioredoxin]-dithiol + NADP(+) = [thioredoxin]-disulfide + NADPH + H(+). The polypeptide is Thioredoxin reductase (trxB) (Helicobacter pylori (strain J99 / ATCC 700824) (Campylobacter pylori J99)).